The sequence spans 45 residues: Protamine Z2 (45 aa).

The segment covering 1-23 has biased composition (basic residues); the sequence is MKCGRKRRRRRRHACKRKKRACK. A disordered region spans residues 1–26; that stretch reads MKCGRKRRRRRRHACKRKKRACKQRS.

As to expression, testis.

The protein resides in the nucleus. It is found in the chromosome. Its function is as follows. Protamines substitute for histones in the chromatin of sperm during the haploid phase of spermatogenesis. They compact sperm DNA into a highly condensed, stable and inactive complex. This Scyliorhinus canicula (Small-spotted catshark) protein is Protamine Z2.